We begin with the raw amino-acid sequence, 913 residues long: Protein translocase subunit SecA (913 aa).

Residues Gln-87, 105–109 (GEGKT), and Asp-512 contribute to the ATP site. 4 residues coordinate Zn(2+): Cys-897, Cys-899, Cys-908, and His-909.

This sequence belongs to the SecA family. Monomer and homodimer. Part of the essential Sec protein translocation apparatus which comprises SecA, SecYEG and auxiliary proteins SecDF-YajC and YidC. It depends on Zn(2+) as a cofactor.

The protein resides in the cell inner membrane. The protein localises to the cytoplasm. It carries out the reaction ATP + H2O + cellular proteinSide 1 = ADP + phosphate + cellular proteinSide 2.. Its function is as follows. Part of the Sec protein translocase complex. Interacts with the SecYEG preprotein conducting channel. Has a central role in coupling the hydrolysis of ATP to the transfer of proteins into and across the cell membrane, serving both as a receptor for the preprotein-SecB complex and as an ATP-driven molecular motor driving the stepwise translocation of polypeptide chains across the membrane. This chain is Protein translocase subunit SecA, found in Pseudomonas fluorescens (strain ATCC BAA-477 / NRRL B-23932 / Pf-5).